We begin with the raw amino-acid sequence, 109 residues long: Thioredoxin 1 (109 aa).

The region spanning 2–109 (SDKIIHLTDD…LKEFLDANLA (108 aa)) is the Thioredoxin domain. Active-site nucleophile residues include Cys-33 and Cys-36. Cys-33 and Cys-36 are oxidised to a cystine. Position 70 is an N6-acetyllysine (Lys-70).

It belongs to the thioredoxin family. As to quaternary structure, monomer.

In terms of biological role, participates in various redox reactions through the reversible oxidation of its active center dithiol to a disulfide and catalyzes dithiol-disulfide exchange reactions. The sequence is that of Thioredoxin 1 (trxA) from Escherichia coli O157:H7.